A 440-amino-acid polypeptide reads, in one-letter code: Ankyrin repeat and MYND domain-containing protein 2 (440 aa).

ANK repeat units lie at residues 45-74 (NGMT…DASC), 79-108 (HGYT…ETDV), and 159-188 (KLAG…NPLL). Zn(2+)-binding residues include C320, C323, C332, C335, C341, C345, H353, and C357. The MYND-type zinc finger occupies 320–357 (CTTCGEKGASKRCSVCKMVIYCDQTCQKTHWFAHKKMC). The span at 371–381 (AAKHKRQEEKN) shows a compositional bias: basic and acidic residues. The interval 371 to 440 (AAKHKRQEEK…APTGPQLSEE (70 aa)) is disordered.

In terms of assembly, interacts with the retinal-specific guanylyl cyclase GC1.

Its subcellular location is the cell projection. The protein resides in the cilium. Functionally, may be involved in the trafficking of signaling proteins to the cilia. The protein is Ankyrin repeat and MYND domain-containing protein 2 (Ankmy2) of Mus musculus (Mouse).